The following is a 243-amino-acid chain: Ribosomal RNA small subunit methyltransferase G (243 aa).

S-adenosyl-L-methionine-binding positions include glycine 79, phenylalanine 84, 130-131, and arginine 150; that span reads AE. The interval 219–243 is disordered; sequence EKKKQTPNKYPRKPGTPGKDPIGKK.

The protein belongs to the methyltransferase superfamily. RNA methyltransferase RsmG family.

It localises to the cytoplasm. In terms of biological role, specifically methylates the N7 position of a guanine in 16S rRNA. The polypeptide is Ribosomal RNA small subunit methyltransferase G (Pediococcus pentosaceus (strain ATCC 25745 / CCUG 21536 / LMG 10740 / 183-1w)).